The following is a 333-amino-acid chain: C4-dicarboxylate-binding periplasmic protein DctP (333 aa).

An N-terminal signal peptide occupies residues 1 to 26; it reads MLTRRILGALVGATALSLALSVPALA.

Belongs to the bacterial solute-binding protein 7 family. As to quaternary structure, the complex comprises the extracytoplasmic solute receptor protein DctP, and the two transmembrane proteins DctQ and DctM.

The protein localises to the periplasm. Part of the tripartite ATP-independent periplasmic (TRAP) transport system DctPQM involved in C4-dicarboxylates uptake. Binds C4-dicarboxylates such as fumarate, succinate, L-malate and D-malate. The polypeptide is C4-dicarboxylate-binding periplasmic protein DctP (Rhodobacter capsulatus (Rhodopseudomonas capsulata)).